A 428-amino-acid polypeptide reads, in one-letter code: Trigger factor (428 aa).

The PPIase FKBP-type domain maps to 165 to 240; the sequence is ADLIKLDAEG…VKEVKRMELP (76 aa).

Belongs to the FKBP-type PPIase family. Tig subfamily.

It localises to the cytoplasm. It catalyses the reaction [protein]-peptidylproline (omega=180) = [protein]-peptidylproline (omega=0). Involved in protein export. Acts as a chaperone by maintaining the newly synthesized protein in an open conformation. Functions as a peptidyl-prolyl cis-trans isomerase. This chain is Trigger factor, found in Prosthecochloris aestuarii (strain DSM 271 / SK 413).